The primary structure comprises 1350 residues: Probable serine/threonine-protein kinase DDB_G0278845 (1350 aa).

Disordered stretches follow at residues 66 to 109 (RELN…NNIR), 121 to 159 (ENGLLESPTSPIRTSSTPTTPTSPPFITSPPFITSPKGL), 179 to 249 (LANN…LNSI), 270 to 296 (SSINGNTTTTTTNTYSYNDNDNVNEYS), 337 to 396 (NNYN…RDDL), 431 to 506 (GSTI…EKKK), 525 to 596 (NDSN…IPTP), and 612 to 701 (NNNS…NTNE). Over residues 84–98 (KYLTSSHSSVVIPQD) the composition is skewed to polar residues. Low complexity-rich tracts occupy residues 127–140 (SPTSPIRTSSTPTT) and 181–210 (NNNNNNNNSNNSNNNSNSSNSNISCSNNSN). Over residues 211-222 (KISRLINNSNTT) the composition is skewed to polar residues. Residues 223–235 (DSNASIRSSNNNN) are compositionally biased toward low complexity. The span at 236–246 (DDFDNNDDEDL) shows a compositional bias: acidic residues. Composition is skewed to low complexity over residues 270-293 (SSINGNTTTTTTNTYSYNDNDNVN) and 337-391 (NNYN…GYNN). Polar residues predominate over residues 431-443 (GSTIFTSTSSDIA). Acidic residues predominate over residues 454-482 (NENENENENENENENENDNDSDSENENEN). 2 stretches are compositionally biased toward low complexity: residues 483–495 (DNSIGNKSNKSNS) and 525–551 (NDSNNNNNNNNSGNNNSFISNGSPFSP). Positions 565-592 (PKPTLQRQRSNSKNVLYSPNASPSNSCK) are enriched in polar residues. Low complexity-rich tracts occupy residues 612-637 (NNNSNNIENQNNNNNNIDNNIDNNID), 645-679 (NNNNNNNNNNNNNNNNNNNNNNNNNNNNNNNNNNN), and 690-701 (KKTPNNKINTNE). The 327-residue stretch at 756–1082 (FTLIEKIGEG…VENIKNHIFF (327 aa)) folds into the Protein kinase domain. ATP contacts are provided by residues 762 to 770 (IGEGGFGQV) and K785. Catalysis depends on D880, which acts as the Proton acceptor. The AGC-kinase C-terminal domain maps to 1083–1203 (NGVPWGKLHD…PRADDQPLLW (121 aa)). Disordered regions lie at residues 1129–1159 (SLLPPPLPPPPQTPTQPQQPSLPPQTPNDKM), 1190–1219 (GFTYPRADDQPLLWNNNNNNNNNNNNNNNN), 1232–1285 (NNNN…NKTV), and 1300–1350 (NCNN…KQQQ). Pro residues predominate over residues 1131–1142 (LPPPLPPPPQTP). Composition is skewed to low complexity over residues 1204–1219 (NNNNNNNNNNNNNNNN), 1232–1283 (NNNN…SNNK), and 1300–1313 (NCNNNNNNDENNIN). Polar residues-rich tracts occupy residues 1314-1330 (TGNLTPPNSSPFNSGEN) and 1338-1350 (PTSPYGSYSKQQQ).

This sequence belongs to the protein kinase superfamily. AGC Ser/Thr protein kinase family.

It carries out the reaction L-seryl-[protein] + ATP = O-phospho-L-seryl-[protein] + ADP + H(+). The catalysed reaction is L-threonyl-[protein] + ATP = O-phospho-L-threonyl-[protein] + ADP + H(+). This Dictyostelium discoideum (Social amoeba) protein is Probable serine/threonine-protein kinase DDB_G0278845.